Consider the following 228-residue polypeptide: Delta-type opioid receptor (228 aa).

Residues 1–3 (GIV) form a helical membrane-spanning segment. The Cytoplasmic portion of the chain corresponds to 4-13 (RYTKMKTATN). The helical transmembrane segment at 14–38 (IYIFNLALADALATSTLPFQSAKYL) threads the bilayer. Residues 39 to 50 (METWPFGELLCK) are Extracellular-facing. Cys49 and Cys126 are joined by a disulfide. A helical membrane pass occupies residues 51-72 (AVLSIDYYNMFTSIFTLTMMSV). Over 73-91 (DRYIAVCHPVKALDFRTPA) the chain is Cytoplasmic. A helical transmembrane segment spans residues 92–114 (KAKLINICIWVLASGVGVPIMVM). At 115–134 (AVTRPRDGAVVCMLQFPSPS) the chain is on the extracellular side. Residues 135 to 166 (WYWDTVTKICVFLFAFVVPILVITVCYGLMLL) form a helical membrane-spanning segment. At 167–189 (RLRSVRLLSGSKEKDRSLRRITR) the chain is on the cytoplasmic side. The chain crosses the membrane as a helical span at residues 190-212 (MVLVVVGAFVVCWAPIHIFVIVW). Topologically, residues 213–227 (TLVDIDRRDPLVVAA) are extracellular.

This sequence belongs to the G-protein coupled receptor 1 family. As to quaternary structure, may form homooligomers. Forms a heterodimer with OPRM1. Interacts with GPRASP1. Interacts with RTP4; the interaction promotes cell surface localization of the OPRD1-OPRM1 heterodimer. Ubiquitinated. A basal ubiquitination seems not to be related to degradation. Ubiquitination is increased upon formation of OPRM1:OPRD1 oligomers leading to proteasomal degradation; the ubiquitination is diminished by RTP4. As to expression, detected in myenteric plexus and smooth muscle (at protein level). Detected in brain and intestine.

The protein resides in the cell membrane. Its function is as follows. G-protein coupled receptor that functions as a receptor for endogenous enkephalins and for a subset of other opioids. Ligand binding causes a conformation change that triggers signaling via guanine nucleotide-binding proteins (G proteins) and modulates the activity of down-stream effectors, such as adenylate cyclase. Signaling leads to the inhibition of adenylate cyclase activity. Inhibits neurotransmitter release by reducing calcium ion currents and increasing potassium ion conductance. Plays a role in the perception of pain and in opiate-mediated analgesia. Plays a role in developing analgesic tolerance to morphine. The protein is Delta-type opioid receptor (OPRD1) of Sus scrofa (Pig).